The following is a 320-amino-acid chain: Olfactory receptor 52N1 (320 aa).

The Extracellular portion of the chain corresponds to 1-27 (MSFLNGTSLTPASFILNGIPGLEDVHL). An N-linked (GlcNAc...) asparagine glycan is attached at N5. Residues 28–48 (WISFPLCTMYSIAITGNFGLM) form a helical membrane-spanning segment. Topologically, residues 49-56 (YLIYCDEA) are cytoplasmic. The helical transmembrane segment at 57-77 (LHRPMYVFLALLSFTDVLMCT) threads the bilayer. Residues 78-101 (STLPNTLFILWFNLKEIDFKACLA) lie on the Extracellular side of the membrane. The cysteines at positions 99 and 191 are disulfide-linked. The helical transmembrane segment at 102–122 (QMFFVHTFTGMESGVLMLMAL) threads the bilayer. Residues 123–141 (DHCVAICFPLRYATILTNS) are Cytoplasmic-facing. Residues 142–162 (VIAKAGFLTFLRGVMLVIPST) form a helical membrane-spanning segment. The Extracellular portion of the chain corresponds to 163–198 (FLTKRLPYCKGNVIPHTYCDHMSVAKISCGNVRVNA). Residues 199–219 (IYGLIVALLIGGFDILCITIS) form a helical membrane-spanning segment. Residues 220–239 (YTMILQAVVSLSSADARQKA) lie on the Cytoplasmic side of the membrane. Residues 240 to 260 (FSTCTAHFCAIVLTYVPAFFT) traverse the membrane as a helical segment. At 261–276 (FFTHHFGGHTIPLHIH) the chain is on the extracellular side. The helical transmembrane segment at 277-297 (IIMANLYLLMPPTMNPIVYGV) threads the bilayer. Over 298 to 320 (KTRQVRESVIRFFLKGKDNSHNF) the chain is Cytoplasmic.

The protein belongs to the G-protein coupled receptor 1 family.

It localises to the cell membrane. Functionally, odorant receptor. This chain is Olfactory receptor 52N1 (OR52N1), found in Homo sapiens (Human).